Reading from the N-terminus, the 269-residue chain is Aquaporin-7 (269 aa).

The Cytoplasmic portion of the chain corresponds to 1–20; sequence MAGSVLENIQSVLQKTWVRE. Residue S4 is modified to Phosphoserine. The helical transmembrane segment at 21–38 threads the bilayer; sequence FLAEFLSTYVLMVFGLGS. The Extracellular portion of the chain corresponds to 39 to 51; that stretch reads VAHMVLGERLGSY. Residues 52–69 traverse the membrane as a helical segment; that stretch reads LGVNLGFGFGVTMGIHVA. Over 70–73 the chain is Cytoplasmic; it reads GGIS. The discontinuously helical intramembrane region spans 74-87; that stretch reads GAHMNAAVTFTNCA. The short motif at 78–80 is the NPA 1 element; that stretch reads NAA. Residues 88 to 95 are Cytoplasmic-facing; it reads LGRMAWKK. The helical transmembrane segment at 96-116 threads the bilayer; sequence FPIYVLGQFLGSFLAAATTYL. Topologically, residues 117-151 are extracellular; it reads IFYGAINHYAGGELLVTGPKSTANIFATYLPEHMT. A helical membrane pass occupies residues 152 to 172; sequence LWRGFVDEVFVTGMLQLCIFA. Topologically, residues 173–184 are cytoplasmic; that stretch reads ITDKLNSPALQG. The helical transmembrane segment at 185–201 threads the bilayer; that stretch reads TEPLMIGILVCVLGVSL. Topologically, residues 202 to 205 are extracellular; sequence GMNT. Residues 206-219 constitute an intramembrane region (discontinuously helical); it reads GYAINPSRDLPPRF. Positions 210 to 212 match the NPA 2 motif; that stretch reads NPS. The Extracellular portion of the chain corresponds to 220 to 237; that stretch reads FTFIAGWGKKVFSAGNNW. A helical transmembrane segment spans residues 238 to 259; the sequence is WWVPVVAPLLGAYLGGIVYLGL. The Cytoplasmic portion of the chain corresponds to 260-269; the sequence is IHAGIPPQGS.

Belongs to the MIP/aquaporin (TC 1.A.8) family. In terms of assembly, homotetramer; each monomer provides an independent glycerol/water pore. Two homotetramers on opposing membranes can dimerize, forming a cell-cell junction. Interacts with PLIN1. Phosphorylation by PKA could prevent the interaction with PLIN1. Detected in heart, kidney and testis.

The protein resides in the cell membrane. It localises to the cytoplasmic vesicle membrane. It is found in the lipid droplet. The enzyme catalyses glycerol(in) = glycerol(out). It catalyses the reaction H2O(in) = H2O(out). The catalysed reaction is urea(in) = urea(out). Its activity is regulated as follows. Glycerol transport is regulated by pH, with the porin being permeable to glycerol at pH 7.4 but not at pH 5.5. Water permeability, however, is not influenced by pH. Not inhibited by mercury ions. In terms of biological role, aquaglyceroporins form homotetrameric transmembrane channels, with each monomer independently mediating glycerol and water transport across the plasma membrane along their osmotic gradient. Could also be permeable to urea. Mediates the efflux of glycerol, formed upon triglyceride hydrolysis, to avoid its accumulation in adipocytes and to make it available to other tissues. In the kidney, mediates the reabsorption of glycerol, preventing its loss in urine, again participating to energy homeostasis. In pancreatic beta cells, it also mediates the efflux of glycerol, regulating its intracellular levels. This Rattus norvegicus (Rat) protein is Aquaporin-7.